Reading from the N-terminus, the 240-residue chain is MMNTYFQQVNRYLTMVAQQESEQINRVAQLIVKRLVQGGIIQLFGSGHSMLLAQECYFRAGGLVPVKPIHIESLMLHQGARQSSQNEKKQAFLAPYKDELQFDDKDVCIIISTSANNPVPIDMAIYAKEAGAHTISLQSLAYQQQPSRHPSGQRLEDIADDVLNTHVPLGDGVLTVDEFQYGPVSTVLGAALLNALCAQIIEILHEQGASLPVFASSNLGNTNNDELIDQYGQRDSFLRP.

The SIS domain occupies 31-206 (IVKRLVQGGI…CAQIIEILHE (176 aa)).

The protein belongs to the UPF0309 family.

This Lysinibacillus sphaericus (Bacillus sphaericus) protein is UPF0309 protein in nagA 3'region.